Here is a 159-residue protein sequence, read N- to C-terminus: Protein-export protein SecB (159 aa).

This sequence belongs to the SecB family. As to quaternary structure, homotetramer, a dimer of dimers. One homotetramer interacts with 1 SecA dimer.

It is found in the cytoplasm. Its function is as follows. One of the proteins required for the normal export of preproteins out of the cell cytoplasm. It is a molecular chaperone that binds to a subset of precursor proteins, maintaining them in a translocation-competent state. It also specifically binds to its receptor SecA. The chain is Protein-export protein SecB from Pseudomonas fluorescens (strain SBW25).